Reading from the N-terminus, the 137-residue chain is Ribosome-binding factor A (137 aa).

Belongs to the RbfA family. In terms of assembly, monomer. Binds 30S ribosomal subunits, but not 50S ribosomal subunits or 70S ribosomes.

It localises to the cytoplasm. Its function is as follows. One of several proteins that assist in the late maturation steps of the functional core of the 30S ribosomal subunit. Associates with free 30S ribosomal subunits (but not with 30S subunits that are part of 70S ribosomes or polysomes). Required for efficient processing of 16S rRNA. May interact with the 5'-terminal helix region of 16S rRNA. In Nitrobacter hamburgensis (strain DSM 10229 / NCIMB 13809 / X14), this protein is Ribosome-binding factor A.